A 393-amino-acid polypeptide reads, in one-letter code: Riboflavin biosynthesis protein RibBA (393 aa).

The tract at residues 1 to 200 is DHBP synthase; sequence MQFDNIDSAL…IDDLIEYRKK (200 aa). D-ribulose 5-phosphate contacts are provided by residues 27–28, Asp-32, 139–143, and Glu-163; these read RE and RNGHT. Glu-28 provides a ligand contact to Mg(2+). His-142 contributes to the Mg(2+) binding site. Residues 201–393 are GTP cyclohydrolase II; it reads LEPEIEFKAK…TKKIKMGHLI (193 aa). Residue 249–253 participates in GTP binding; that stretch reads RLHSA. Cys-254, Cys-265, and Cys-267 together coordinate Zn(2+). GTP-binding positions include Gln-270, 291 to 293, and Thr-313; that span reads EGR. Residue Asp-325 is the Proton acceptor; for GTP cyclohydrolase activity of the active site. The active-site Nucleophile; for GTP cyclohydrolase activity is Arg-327. GTP-binding residues include Ser-348 and Lys-353.

The protein in the N-terminal section; belongs to the DHBP synthase family. In the C-terminal section; belongs to the GTP cyclohydrolase II family. Mg(2+) is required as a cofactor. Requires Mn(2+) as cofactor. Zn(2+) serves as cofactor.

It carries out the reaction D-ribulose 5-phosphate = (2S)-2-hydroxy-3-oxobutyl phosphate + formate + H(+). It catalyses the reaction GTP + 4 H2O = 2,5-diamino-6-hydroxy-4-(5-phosphoribosylamino)-pyrimidine + formate + 2 phosphate + 3 H(+). It functions in the pathway cofactor biosynthesis; riboflavin biosynthesis; 2-hydroxy-3-oxobutyl phosphate from D-ribulose 5-phosphate: step 1/1. It participates in cofactor biosynthesis; riboflavin biosynthesis; 5-amino-6-(D-ribitylamino)uracil from GTP: step 1/4. Catalyzes the conversion of D-ribulose 5-phosphate to formate and 3,4-dihydroxy-2-butanone 4-phosphate. Its function is as follows. Catalyzes the conversion of GTP to 2,5-diamino-6-ribosylamino-4(3H)-pyrimidinone 5'-phosphate (DARP), formate and pyrophosphate. The sequence is that of Riboflavin biosynthesis protein RibBA from Staphylococcus aureus (strain Mu50 / ATCC 700699).